Consider the following 43-residue polypeptide: Protein PsbN (43 aa).

A helical membrane pass occupies residues 4–24 (AIVLSISMAAVVVAITGISIY).

Belongs to the PsbN family.

The protein resides in the cellular thylakoid membrane. Its function is as follows. May play a role in photosystem I and II biogenesis. The polypeptide is Protein PsbN (Nostoc punctiforme (strain ATCC 29133 / PCC 73102)).